Consider the following 386-residue polypeptide: Leupaxin (386 aa).

Methionine 1 bears the N-acetylmethionine mark. Residues glutamate 3–threonine 15 carry the LD motif 1 motif. The tract at residues glutamate 12 to aspartate 51 is disordered. Residues leucine 16–alanine 26 are compositionally biased toward polar residues. Serine 19 carries the post-translational modification Phosphoserine. Tyrosine 22 carries the post-translational modification Phosphotyrosine. Over residues serine 33–serine 44 the composition is skewed to basic and acidic residues. Tyrosine 62 bears the Phosphotyrosine mark. 2 consecutive short sequence motifs (LD motif) follow at residues asparagine 70–proline 82 and glutamine 92–methionine 103. Tyrosine 72 is modified (phosphotyrosine; by LYN). At serine 81 the chain carries Phosphoserine. 4 consecutive LIM zinc-binding domains span residues glycine 150 to proline 209, arginine 210 to serine 267, proline 268 to threonine 327, and leucine 328 to leucine 386.

The protein belongs to the paxillin family. As to quaternary structure, interacts with unphosphorylated ITGA4. Interacts with AR and SRF. Interacts with PTK2B/PYK2, PTPN22 and PTPN12. Interacts (via LD motif 3) with LYN and the interaction is induced upon B-cell antigen receptor (BCR) activation. Interacts (via LD motif 3) with PTK2/FAK. In terms of processing, phosphorylated on tyrosine residues. Phosphorylation on Tyr-72 is important for its inhibitory function. Bombesin stimulates phosphorylation on Tyr-22, Tyr-62 and Tyr-72.

The protein resides in the cytoplasm. The protein localises to the cell junction. It is found in the focal adhesion. Its subcellular location is the nucleus. It localises to the perinuclear region. The protein resides in the cell projection. The protein localises to the podosome. It is found in the cell membrane. Functionally, transcriptional coactivator for androgen receptor (AR) and serum response factor (SRF). Contributes to the regulation of cell adhesion, spreading and cell migration and acts as a negative regulator in integrin-mediated cell adhesion events. Suppresses the integrin-induced tyrosine phosphorylation of paxillin (PXN). May play a critical role as an adapter protein in the formation of the adhesion zone in osteoclasts. Negatively regulates B-cell antigen receptor (BCR) signaling. The sequence is that of Leupaxin (LPXN) from Oryctolagus cuniculus (Rabbit).